The following is an 89-amino-acid chain: Small ribosomal subunit protein uS15 (89 aa).

It belongs to the universal ribosomal protein uS15 family. In terms of assembly, part of the 30S ribosomal subunit. Forms a bridge to the 50S subunit in the 70S ribosome, contacting the 23S rRNA.

In terms of biological role, one of the primary rRNA binding proteins, it binds directly to 16S rRNA where it helps nucleate assembly of the platform of the 30S subunit by binding and bridging several RNA helices of the 16S rRNA. Functionally, forms an intersubunit bridge (bridge B4) with the 23S rRNA of the 50S subunit in the ribosome. The protein is Small ribosomal subunit protein uS15 of Anaeromyxobacter sp. (strain Fw109-5).